The primary structure comprises 122 residues: Probable DNA-directed RNA polymerase II subunit RPB11 (122 aa).

The protein belongs to the archaeal Rpo11/eukaryotic RPB11/RPC19 RNA polymerase subunit family. Component of the RNA polymerase II (Pol II) complex consisting of 12 subunits.

The protein resides in the nucleus. Functionally, DNA-dependent RNA polymerase catalyzes the transcription of DNA into RNA using the four ribonucleoside triphosphates as substrates. Component of RNA polymerase II which synthesizes mRNA precursors and many functional non-coding RNAs. Pol II is the central component of the basal RNA polymerase II transcription machinery. It is composed of mobile elements that move relative to each other. RPB11 is part of the core element with the central large cleft. In Caenorhabditis briggsae, this protein is Probable DNA-directed RNA polymerase II subunit RPB11 (rpb-11).